The chain runs to 498 residues: 3-octaprenyl-4-hydroxybenzoate carboxy-lyase (498 aa).

A Mn(2+)-binding site is contributed by N176. Residues 179 to 181 (IYR), 193 to 195 (RWL), and 198 to 199 (RG) each bind prenylated FMN. E242 contributes to the Mn(2+) binding site. The Proton donor role is filled by D291.

The protein belongs to the UbiD family. As to quaternary structure, homohexamer. Prenylated FMN serves as cofactor. Requires Mn(2+) as cofactor.

The protein resides in the cell membrane. It catalyses the reaction a 4-hydroxy-3-(all-trans-polyprenyl)benzoate + H(+) = a 2-(all-trans-polyprenyl)phenol + CO2. The protein operates within cofactor biosynthesis; ubiquinone biosynthesis. Catalyzes the decarboxylation of 3-octaprenyl-4-hydroxy benzoate to 2-octaprenylphenol, an intermediate step in ubiquinone biosynthesis. This is 3-octaprenyl-4-hydroxybenzoate carboxy-lyase from Escherichia coli O6:K15:H31 (strain 536 / UPEC).